The following is a 229-amino-acid chain: MNQWEELQESVGFDFQDVELLKQAFTHSSYVNEHRRENVKDNERLEFLGDAVLELTVSNYLFNKYPDMAEGHMTKMRAAIVCEPSLVEFAEAIHFSKYIRLGKGEEKAGGRTRPALLADVFESFIGALYLDNGIDKVVTFLERVIFPKIDAGEYLQTVDYKTQLQEIVQRDRDVLIEYDILGETGPAHNKAFDAQVIVNGQVLGKGSGRTKKQAEQSAAQFAINQLTHR.

One can recognise an RNase III domain in the interval 4–133; the sequence is WEELQESVGF…FIGALYLDNG (130 aa). E46 lines the Mg(2+) pocket. The active site involves D50. The Mg(2+) site is built by D119 and E122. E122 is a catalytic residue. The region spanning 159–228 is the DRBM domain; that stretch reads DYKTQLQEIV…AQFAINQLTH (70 aa).

It belongs to the ribonuclease III family. In terms of assembly, homodimer. The cofactor is Mg(2+).

It localises to the cytoplasm. It carries out the reaction Endonucleolytic cleavage to 5'-phosphomonoester.. Functionally, digests double-stranded RNA. Involved in the processing of primary rRNA transcript to yield the immediate precursors to the large and small rRNAs (23S and 16S). Processes some mRNAs, and tRNAs when they are encoded in the rRNA operon. Processes pre-crRNA and tracrRNA of type II CRISPR loci if present in the organism. The chain is Ribonuclease 3 from Listeria welshimeri serovar 6b (strain ATCC 35897 / DSM 20650 / CCUG 15529 / CIP 8149 / NCTC 11857 / SLCC 5334 / V8).